Consider the following 212-residue polypeptide: MPGPVIEEVNEEALMDAIKEQMKLQKENDVVVEDVKDGDEDDDDVDDDDDEIADGAGENEASKQSRSEKKSRKAMLKLGMKPVTDVSRVTIKRSKNVLFVISKPDVFKSPNSETYVIFGEAKIDDMSSQLQAQAAQRFKMPDVASMIPNTDGSEAATVAQEEEDDEDVDETGVEAKDIDLVMTQAGVSRPKAVKALKESNGDIVSAIMELTT.

The span at glutamine 25 to valine 35 shows a compositional bias: basic and acidic residues. A disordered region spans residues glutamine 25–alanine 74. The segment covering lysine 36–alanine 53 has biased composition (acidic residues). The region spanning serine 65 to leucine 130 is the NAC-A/B domain. One can recognise a UBA domain in the interval valine 173–leucine 210.

Belongs to the NAC-alpha family.

Its function is as follows. May promote appropriate targeting of ribosome-nascent polypeptide complexes. The chain is Nascent polypeptide-associated complex subunit alpha-like protein 4 from Arabidopsis thaliana (Mouse-ear cress).